We begin with the raw amino-acid sequence, 386 residues long: Succinate--CoA ligase [ADP-forming] subunit beta (386 aa).

The 236-residue stretch at 9 to 244 (KALFREHGIP…ETQEDAREAR (236 aa)) folds into the ATP-grasp domain. ATP contacts are provided by residues Lys46, 53-55 (GRG), Glu99, Thr102, and Glu107. Mg(2+) is bound by residues Asn199 and Asp213. Residues Asn264 and 321 to 323 (GIV) contribute to the substrate site.

The protein belongs to the succinate/malate CoA ligase beta subunit family. Heterotetramer of two alpha and two beta subunits. Mg(2+) is required as a cofactor.

It carries out the reaction succinate + ATP + CoA = succinyl-CoA + ADP + phosphate. The enzyme catalyses GTP + succinate + CoA = succinyl-CoA + GDP + phosphate. The protein operates within carbohydrate metabolism; tricarboxylic acid cycle; succinate from succinyl-CoA (ligase route): step 1/1. Functionally, succinyl-CoA synthetase functions in the citric acid cycle (TCA), coupling the hydrolysis of succinyl-CoA to the synthesis of either ATP or GTP and thus represents the only step of substrate-level phosphorylation in the TCA. The beta subunit provides nucleotide specificity of the enzyme and binds the substrate succinate, while the binding sites for coenzyme A and phosphate are found in the alpha subunit. In Thioalkalivibrio sulfidiphilus (strain HL-EbGR7), this protein is Succinate--CoA ligase [ADP-forming] subunit beta.